The chain runs to 550 residues: Arginine--tRNA ligase (550 aa).

Residues 130–140 (ANPTGPIHIGG) carry the 'HIGH' region motif.

Belongs to the class-I aminoacyl-tRNA synthetase family. As to quaternary structure, monomer.

The protein localises to the cytoplasm. The enzyme catalyses tRNA(Arg) + L-arginine + ATP = L-arginyl-tRNA(Arg) + AMP + diphosphate. The sequence is that of Arginine--tRNA ligase (argS) from Mycobacterium leprae (strain TN).